Reading from the N-terminus, the 854-residue chain is uncharacterized protein (854 aa).

Belongs to the PEP-utilizing enzyme family.

This is an uncharacterized protein from Mycobacterium tuberculosis (strain CDC 1551 / Oshkosh).